A 418-amino-acid polypeptide reads, in one-letter code: Serine--tRNA ligase (418 aa).

228 to 230 provides a ligand contact to L-serine; the sequence is TSE. Residues 258 to 260 and Val-274 contribute to the ATP site; that span reads RKE. Glu-281 contacts L-serine. 345-348 serves as a coordination point for ATP; that stretch reads EVVS. Thr-381 is an L-serine binding site.

It belongs to the class-II aminoacyl-tRNA synthetase family. Type-1 seryl-tRNA synthetase subfamily. Homodimer. The tRNA molecule binds across the dimer.

It localises to the cytoplasm. It carries out the reaction tRNA(Ser) + L-serine + ATP = L-seryl-tRNA(Ser) + AMP + diphosphate + H(+). It catalyses the reaction tRNA(Sec) + L-serine + ATP = L-seryl-tRNA(Sec) + AMP + diphosphate + H(+). It functions in the pathway aminoacyl-tRNA biosynthesis; selenocysteinyl-tRNA(Sec) biosynthesis; L-seryl-tRNA(Sec) from L-serine and tRNA(Sec): step 1/1. Catalyzes the attachment of serine to tRNA(Ser). Is also able to aminoacylate tRNA(Sec) with serine, to form the misacylated tRNA L-seryl-tRNA(Sec), which will be further converted into selenocysteinyl-tRNA(Sec). This chain is Serine--tRNA ligase, found in Cenarchaeum symbiosum (strain A).